We begin with the raw amino-acid sequence, 196 residues long: Holliday junction branch migration complex subunit RuvA (196 aa).

The tract at residues 1-63 (MLDFIKGEIV…EETHQLFGFI (63 aa)) is domain I. The tract at residues 64-142 (DKKERQLFTH…PDNIPSSDTI (79 aa)) is domain II. Residues 143-146 (ITNI) form a flexible linker region. A domain III region spans residues 146-196 (ISSNITKEAITALITLGFSQSASQKVVNKIVSNNSSSTTIEQIIKKALKLL).

This sequence belongs to the RuvA family. In terms of assembly, homotetramer. Forms an RuvA(8)-RuvB(12)-Holliday junction (HJ) complex. HJ DNA is sandwiched between 2 RuvA tetramers; dsDNA enters through RuvA and exits via RuvB. An RuvB hexamer assembles on each DNA strand where it exits the tetramer. Each RuvB hexamer is contacted by two RuvA subunits (via domain III) on 2 adjacent RuvB subunits; this complex drives branch migration. In the full resolvosome a probable DNA-RuvA(4)-RuvB(12)-RuvC(2) complex forms which resolves the HJ.

It localises to the cytoplasm. Its function is as follows. The RuvA-RuvB-RuvC complex processes Holliday junction (HJ) DNA during genetic recombination and DNA repair, while the RuvA-RuvB complex plays an important role in the rescue of blocked DNA replication forks via replication fork reversal (RFR). RuvA specifically binds to HJ cruciform DNA, conferring on it an open structure. The RuvB hexamer acts as an ATP-dependent pump, pulling dsDNA into and through the RuvAB complex. HJ branch migration allows RuvC to scan DNA until it finds its consensus sequence, where it cleaves and resolves the cruciform DNA. The polypeptide is Holliday junction branch migration complex subunit RuvA (Azobacteroides pseudotrichonymphae genomovar. CFP2).